Reading from the N-terminus, the 62-residue chain is uncharacterized protein (62 aa).

Residues 1–13 (MGESKSPQESSSE) show a composition bias toward polar residues. A disordered region spans residues 1 to 62 (MGESKSPQES…SRREFRRKSG (62 aa)). Basic and acidic residues predominate over residues 14-28 (GETKRKFREALDRKM).

This is an uncharacterized protein from Mycobacterium tuberculosis (strain ATCC 25618 / H37Rv).